We begin with the raw amino-acid sequence, 966 residues long: Mitogen-activated protein kinase kinase kinase 13 (966 aa).

Disordered stretches follow at residues 1 to 22 and 93 to 112; these read MANFQEHLSCSSSPHLPFSESK and SEMAVSQGNSNTVDAESTSG. Residues 96-112 show a composition bias toward polar residues; it reads AVSQGNSNTVDAESTSG. The Protein kinase domain maps to 168-409; the sequence is ISELQWLGSG…FRQTLMHLDI (242 aa). ATP contacts are provided by residues 174–182 and Lys-195; that span reads LGSGAQGAV. Asp-279 (proton acceptor) is an active-site residue. Leucine-zipper stretches follow at residues 433–454 and 486–507; these read VKKHFEKIKSEGTCIHRLDEEL and LSAIMLQLEMREKELVKREQAV. Disordered regions lie at residues 534–652, 744–834, 846–873, and 887–906; these read KRKG…SQSH, DIPS…RRQR, STFSSENFSVSDGEEGNTSDHSNSPDEL, and DLLSQTPEIPIDISSHSDGL. Residues 567–581 show a composition bias toward low complexity; sequence SPLSGSPKMSTSSSK. The segment covering 582–594 has biased composition (basic residues); that stretch reads SRYRSKPRHRRGN. Composition is skewed to polar residues over residues 609–629 and 781–795; these read QPAQENSPNPTYLHQAQSQYP and FSSCRSESSLGTSHL. Acidic residues predominate over residues 814–827; the sequence is DSSEEEEGEVDSEV. Residues 815 to 828 form an acidic region; that stretch reads SSEEEEGEVDSEVE. Positions 846–855 are enriched in polar residues; that stretch reads STFSSENFSV.

This sequence belongs to the protein kinase superfamily. STE Ser/Thr protein kinase family. MAP kinase kinase kinase subfamily. As to quaternary structure, homodimer; forms dimers through the leucine-zipper motif. Interacts with the C-terminus of MAPK8IP1 through the kinase catalytic domain. Binds PRDX3. Associates with the IKK complex through the kinase domain. The cofactor is Mg(2+). In terms of processing, autophosphorylated on serine and threonine residues.

It is found in the cytoplasm. The protein localises to the membrane. It carries out the reaction L-seryl-[protein] + ATP = O-phospho-L-seryl-[protein] + ADP + H(+). The catalysed reaction is L-threonyl-[protein] + ATP = O-phospho-L-threonyl-[protein] + ADP + H(+). With respect to regulation, activated by autophosphorylation and homodimerization. In terms of biological role, activates the JUN N-terminal pathway through activation of the MAP kinase kinase MAP2K7. Acts synergistically with PRDX3 to regulate the activation of NF-kappa-B in the cytosol. This activation is kinase-dependent and involves activating the IKK complex, the IKBKB-containing complex that phosphorylates inhibitors of NF-kappa-B. This Pongo abelii (Sumatran orangutan) protein is Mitogen-activated protein kinase kinase kinase 13.